Consider the following 449-residue polypeptide: Tubulin beta-4 chain (449 aa).

The short motif at Met-1–Ile-4 is the MREI motif element. GTP-binding residues include Gln-11, Glu-69, Ser-138, Gly-142, Thr-143, Gly-144, Asn-204, and Asn-226. Residue Glu-69 participates in Mg(2+) binding. Residues Glu-421–Lys-449 form a disordered region. Over residues Thr-429–Lys-449 the composition is skewed to acidic residues. Residue Glu-438 is modified to 5-glutamyl polyglutamate. Ser-444 is subject to Phosphoserine.

Belongs to the tubulin family. Dimer of alpha and beta chains. A typical microtubule is a hollow water-filled tube with an outer diameter of 25 nm and an inner diameter of 15 nM. Alpha-beta heterodimers associate head-to-tail to form protofilaments running lengthwise along the microtubule wall with the beta-tubulin subunit facing the microtubule plus end conferring a structural polarity. Microtubules usually have 13 protofilaments but different protofilament numbers can be found in some organisms and specialized cells. The cofactor is Mg(2+). In terms of processing, some glutamate residues at the C-terminus are polyglycylated, resulting in polyglycine chains on the gamma-carboxyl group. Glycylation is mainly limited to tubulin incorporated into axonemes (cilia and flagella) whereas glutamylation is prevalent in neuronal cells, centrioles, axonemes, and the mitotic spindle. Both modifications can coexist on the same protein on adjacent residues, and lowering polyglycylation levels increases polyglutamylation, and reciprocally. The precise function of polyglycylation is still unclear. Some glutamate residues at the C-terminus are polyglutamylated, resulting in polyglutamate chains on the gamma-carboxyl group. Polyglutamylation plays a key role in microtubule severing by spastin (SPAST). SPAST preferentially recognizes and acts on microtubules decorated with short polyglutamate tails: severing activity by SPAST increases as the number of glutamates per tubulin rises from one to eight, but decreases beyond this glutamylation threshold. In terms of tissue distribution, neuron specific.

The protein resides in the cytoplasm. It localises to the cytoskeleton. Tubulin is the major constituent of microtubules, a cylinder consisting of laterally associated linear protofilaments composed of alpha- and beta-tubulin heterodimers. Microtubules grow by the addition of GTP-tubulin dimers to the microtubule end, where a stabilizing cap forms. Below the cap, tubulin dimers are in GDP-bound state, owing to GTPase activity of alpha-tubulin. This is Tubulin beta-4 chain from Gallus gallus (Chicken).